Reading from the N-terminus, the 837-residue chain is Amyloid-beta A4 precursor protein-binding family A member 1 (837 aa).

Disordered stretches follow at residues 1–93 (MNHL…DTAE), 238–342 (YDER…SKEK), and 358–435 (EEVK…ESRK). A compositionally biased stretch (acidic residues) spans 23–38 (ESVEADLEHPEVEEEQ). Residues serine 78, serine 242, serine 246, serine 248, serine 263, serine 280, and serine 285 each carry the phosphoserine modification. A munc-18-1 binding region spans residues 226–314 (YRQEALGARL…TPAGGRPDSP (89 aa)). The span at 238–254 (YDERSDGESDSPEKEAE) shows a compositional bias: basic and acidic residues. A Phosphothreonine modification is found at threonine 305. Phosphoserine occurs at positions 313 and 367. Phosphothreonine is present on threonine 370. Positions 373–436 (EPKEPIWVMR…ASTNKESRKS (64 aa)) are LIN-2/CASK binding. Residues 387–398 (PTRDCDDQRPMD) show a composition bias toward basic and acidic residues. Positions 399–418 (GDSPSPGSSSPLGAESSSTS) are enriched in low complexity. 4 positions are modified to phosphoserine: serine 401, serine 403, serine 408, and serine 568. Residues 457–643 (DGIIFAANYL…LLNTQDMYND (187 aa)) form the PID domain. The tract at residues 626–641 (LSQKEYSDLLNTQDMY) is autoinhibitory helix linker. 2 PDZ domains span residues 656-742 (DVFI…IVRC) and 747-822 (TVLI…TMPA).

As to quaternary structure, part of a multimeric complex containing STXBP1 and STX1A. Interacts with STXBP1. Also part of the brain-specific heterotrimeric complex LIN-10/X11-alpha, LIN-2/CASK, and LIN7. Component of the brain-specific heterotrimeric complex (LIN-10-LIN-2-LIN-7 complex) composed of at least APBA1, CASK, and LIN7, which associates with the motor protein KIF17 to transport vesicles along microtubules. Within the complex, interacts (via PDZ domain) with the motor protein KIF17; the interaction is direct and is required for association of KIF17 with the cargo that is to be transported. Both isoform 1 and isoform 2 bind to the cytoplasmic domain of amyloid protein (APP). Interacts (via PDZ 1 and 2 domains) with FSPB. Isoform 2, but not isoform 1, interacts (via its truncated PID domain) with active, GTP-bound RAB6A and RAB6B. Brain and spinal cord. Isoform 2 is expressed in testis and brain, but not detected in lung, liver or spleen.

Its subcellular location is the cytoplasm. It localises to the perinuclear region. The protein resides in the nucleus. It is found in the golgi apparatus. Its function is as follows. Putative function in synaptic vesicle exocytosis by binding to Munc18-1, an essential component of the synaptic vesicle exocytotic machinery. May modulate processing of the amyloid-beta precursor protein (APP) and hence formation of APP-beta. Component of the LIN-10-LIN-2-LIN-7 complex, which associates with the motor protein KIF17 to transport vesicles containing N-methyl-D-aspartate (NMDA) receptor subunit NR2B along microtubules. The sequence is that of Amyloid-beta A4 precursor protein-binding family A member 1 (APBA1) from Homo sapiens (Human).